A 173-amino-acid chain; its full sequence is NADH-ubiquinone oxidoreductase chain 6 (173 aa).

Transmembrane regions (helical) follow at residues 1–21 (MTYV…AVAS), 25–45 (PYFG…VLIW), 53–73 (LVLF…SAAL), 82–102 (LGSW…FGIL), and 142–162 (GVLL…LELV).

Belongs to the complex I subunit 6 family.

It localises to the mitochondrion membrane. The enzyme catalyses a ubiquinone + NADH + 5 H(+)(in) = a ubiquinol + NAD(+) + 4 H(+)(out). Functionally, core subunit of the mitochondrial membrane respiratory chain NADH dehydrogenase (Complex I) that is believed to belong to the minimal assembly required for catalysis. Complex I functions in the transfer of electrons from NADH to the respiratory chain. The immediate electron acceptor for the enzyme is believed to be ubiquinone. The polypeptide is NADH-ubiquinone oxidoreductase chain 6 (MT-ND6) (Tetraodon nigroviridis (Spotted green pufferfish)).